A 295-amino-acid chain; its full sequence is Sulfotransferase 1E1 (295 aa).

48-53 (KSGTTW) contributes to the 3'-phosphoadenylyl sulfate binding site. Residue 106-108 (KTH) coordinates substrate. The active-site Proton acceptor is the His108. 3'-phosphoadenylyl sulfate-binding residues include Arg130 and Ser138. Ser156 is modified (phosphoserine). 3'-phosphoadenylyl sulfate contacts are provided by residues Tyr193, 227–232 (TSFQEM), and 257–259 (RKG).

The protein belongs to the sulfotransferase 1 family. As to quaternary structure, homodimer. As to expression, testis and at very low level in the placenta.

It localises to the cytoplasm. It is found in the cytosol. The enzyme catalyses estrone + 3'-phosphoadenylyl sulfate = estrone 3-sulfate + adenosine 3',5'-bisphosphate + H(+). It carries out the reaction 17beta-estradiol + 3'-phosphoadenylyl sulfate = 17beta-estradiol 3-sulfate + adenosine 3',5'-bisphosphate + H(+). The catalysed reaction is (24S)-hydroxycholesterol + 3'-phosphoadenylyl sulfate = (24S)-hydroxycholesterol 3-sulfate + adenosine 3',5'-bisphosphate + H(+). It catalyses the reaction 3beta-hydroxyandrost-5-en-17-one + 3'-phosphoadenylyl sulfate = dehydroepiandrosterone 3-sulfate + adenosine 3',5'-bisphosphate + H(+). The enzyme catalyses 4-ethylphenol + 3'-phosphoadenylyl sulfate = 4-ethylphenyl sulfate + adenosine 3',5'-bisphosphate + H(+). Its activity is regulated as follows. Inhibited by estradiol. Sulfotransferase that utilizes 3'-phospho-5'-adenylyl sulfate (PAPS) as sulfonate donor to catalyze the sulfate conjugation of estradiol and estrone. Is a key enzyme in estrogen homeostasis, the sulfation of estrogens leads to their inactivation. Also sulfates dehydroepiandrosterone, pregnenolone, (24S)-hydroxycholesterol and xenobiotic compounds like ethinylestradiol, equalenin, diethyl stilbesterol and 1-naphthol at significantly lower efficiency. Does not sulfonate cortisol, testosterone and dopamine. May play a role in gut microbiota-host metabolic interaction. O-sulfonates 4-ethylphenol (4-EP), a dietary tyrosine-derived metabolite produced by gut bacteria. The product 4-EPS crosses the blood-brain barrier and may negatively regulate oligodendrocyte maturation and myelination, affecting the functional connectivity of different brain regions associated with the limbic system. This Mus musculus (Mouse) protein is Sulfotransferase 1E1 (Sult1e1).